Consider the following 439-residue polypeptide: uncharacterized protein (439 aa).

Disordered regions lie at residues 1 to 36 (MRPGNAATAHDTGTQPRPGPTENWRSPAAVTRSKQA), 126 to 157 (SRTGAAVSDEYRPTGAALEQPGQEPGGTGVPI), and 411 to 439 (FRSDVPQPPPSPACRTTRAGSGAVAAVPR).

This is an uncharacterized protein from Streptomyces fradiae (Streptomyces roseoflavus).